The chain runs to 1105 residues: DNA polymerase delta catalytic subunit (1105 aa).

A disordered region spans residues 1-46 (MSSGGRGGKRRGAPPPGPSGAAAKRAHPGGTPQPPPPAATAAAPVA). Zn(2+) contacts are provided by cysteine 1015, cysteine 1018, cysteine 1030, and cysteine 1033. The CysA-type zinc-finger motif lies at 1015-1033 (CLGCKAVISGSNQTLCFHC). [4Fe-4S] cluster is bound by residues cysteine 1062, cysteine 1065, cysteine 1075, and cysteine 1080. Positions 1062 to 1080 (CQECQGSLHQDVLCTSRDC) match the CysB motif motif.

The protein belongs to the DNA polymerase type-B family. Heterodimer with subunits of 125 kDa and 50 kDa. The 125 kDa subunit contains the polymerase active site and most likely the active site for the 3'-5' exonuclease activity. Requires [4Fe-4S] cluster as cofactor.

The protein resides in the nucleus. The enzyme catalyses DNA(n) + a 2'-deoxyribonucleoside 5'-triphosphate = DNA(n+1) + diphosphate. In terms of biological role, this polymerase possesses two enzymatic activities: DNA synthesis (polymerase) and an exonucleolytic activity that degrades single-stranded DNA in the 3'- to 5'-direction. This Oryza sativa subsp. japonica (Rice) protein is DNA polymerase delta catalytic subunit (POLD1).